The following is a 415-amino-acid chain: Histidine--tRNA ligase (415 aa).

The protein belongs to the class-II aminoacyl-tRNA synthetase family. Homodimer.

The protein resides in the cytoplasm. The catalysed reaction is tRNA(His) + L-histidine + ATP = L-histidyl-tRNA(His) + AMP + diphosphate + H(+). This is Histidine--tRNA ligase from Clostridium botulinum (strain Loch Maree / Type A3).